Reading from the N-terminus, the 860-residue chain is Eukaryotic translation initiation factor 3 subunit C (860 aa).

Positions 1–79 (MSSRFFHGGS…ESDEEEDRVT (79 aa)) are disordered. Acidic residues-rich tracts occupy residues 16-53 (SSDE…DDEA) and 67-76 (DLDESDEEED). The PCI domain occupies 598-772 (FHMHINLELL…NAIVFRKGVE (175 aa)). The segment at 808 to 860 (AFQRDQGPGGRLGRGQGRGGQRTAGGRPPIGGQQRRPGGQQFSGGALGGAIKA) is disordered. Over residues 814–830 (GPGGRLGRGQGRGGQRT) the composition is skewed to gly residues. The segment covering 831 to 847 (AGGRPPIGGQQRRPGGQ) has biased composition (low complexity). The segment covering 848–860 (QFSGGALGGAIKA) has biased composition (gly residues).

Belongs to the eIF-3 subunit C family. Component of the eukaryotic translation initiation factor 3 (eIF-3) complex.

It localises to the cytoplasm. Functionally, component of the eukaryotic translation initiation factor 3 (eIF-3) complex, which is involved in protein synthesis of a specialized repertoire of mRNAs and, together with other initiation factors, stimulates binding of mRNA and methionyl-tRNAi to the 40S ribosome. The eIF-3 complex specifically targets and initiates translation of a subset of mRNAs involved in cell proliferation. This is Eukaryotic translation initiation factor 3 subunit C from Coccidioides immitis (strain RS) (Valley fever fungus).